Here is a 148-residue protein sequence, read N- to C-terminus: Deoxyuridine 5'-triphosphate nucleotidohydrolase (148 aa).

Substrate is bound by residues 67–69 (RSG), Asn-80, 84–86 (LID), and Met-94.

This sequence belongs to the dUTPase family. The cofactor is Mg(2+).

The enzyme catalyses dUTP + H2O = dUMP + diphosphate + H(+). It participates in pyrimidine metabolism; dUMP biosynthesis; dUMP from dCTP (dUTP route): step 2/2. In terms of biological role, this enzyme is involved in nucleotide metabolism: it produces dUMP, the immediate precursor of thymidine nucleotides and it decreases the intracellular concentration of dUTP so that uracil cannot be incorporated into DNA. The protein is Deoxyuridine 5'-triphosphate nucleotidohydrolase of Francisella tularensis subsp. holarctica (strain FTNF002-00 / FTA).